Consider the following 1274-residue polypeptide: Paired amphipathic helix protein Sin3a (1274 aa).

2 disordered regions span residues 1–26 and 85–110; these read MKRR…STEA and HHHP…PPVA. Ser10 carries the phosphoserine modification. Positions 119–189 constitute a PAH 1 domain; that stretch reads QRLKVEDALS…MGFNTFLPPG (71 aa). The segment at 119–196 is interaction with HCFC1; that stretch reads QRLKVEDALS…PPGYKIEVQT (78 aa). Residues Lys122 and Lys134 each participate in a glycyl lysine isopeptide (Lys-Gly) (interchain with G-Cter in SUMO2) cross-link. The tract at residues 205–297 is disordered; sequence PGQVHQIPTH…ISLGTAPSLQ (93 aa). The tract at residues 205 to 479 is interaction with REST; it reads PGQVHQIPTH…KVRKALRSAE (275 aa). Positions 228–237 are enriched in low complexity; sequence SQPSSQSAPT. A compositionally biased stretch (polar residues) spans 252 to 266; that stretch reads KPSQLQAHTPASQQT. A compositionally biased stretch (pro residues) spans 267–282; that stretch reads PPLPPYASPRSPPVQP. The residue at position 277 (Ser277) is a Phosphoserine. Position 284 is a phosphothreonine (Thr284). A compositionally biased stretch (polar residues) spans 284–297; it reads TPVTISLGTAPSLQ. Residues 300–383 enclose the PAH 2 domain; the sequence is QPVEFNHAIN…SEFGQFLPDA (84 aa). Residues 398–443 form a disordered region; sequence DSVRNDHGGTVKKPQLNNKPQRPSQNGCQIRRHSGTGATPPVKKKP. Polar residues predominate over residues 412 to 425; the sequence is QLNNKPQRPSQNGC. The region spanning 457–526 is the PAH 3 domain; the sequence is SKHGVGTESL…NWFKNFLGYK (70 aa). The interval 459–526 is interaction with SAP30; the sequence is HGVGTESLFF…NWFKNFLGYK (68 aa). An N6-acetyllysine modification is found at Lys470. The interaction with NCOR1 stretch occupies residues 524 to 851; the sequence is GYKESVHLES…EMDVDEATGA (328 aa). An interactions with SUDS3 and SAP130 region spans residues 525-660; the sequence is YKESVHLESF…KFRLDNTLGG (136 aa). Lys564 participates in a covalent cross-link: Glycyl lysine isopeptide (Lys-Gly) (interchain with G-Cter in SUMO2). The interval 688–830 is interactions with HDAC1 and ARID4B; that stretch reads NPSIAVPIVL…IPDLLFAQRG (143 aa). Ser833 bears the Phosphoserine mark. Residues 835 to 847 show a composition bias toward acidic residues; sequence VEEEEEEEMDVDE. Positions 835–865 are disordered; that stretch reads VEEEEEEEMDVDEATGAPKKHNGVGGSPPKS. The residue at position 861 (Ser861) is a Phosphoserine. An N6-acetyllysine mark is found at Lys866 and Lys876. The segment at 889–968 is interaction with OGT; the sequence is VNNNWYIFMR…YYPAFLDMVR (80 aa). Positions 904 to 933 form a coiled coil; that stretch reads CLRLLRICSQAERQIEEENREREWEREVLG. Phosphoserine is present on residues Ser941, Ser1090, and Ser1113. Residues 1137 to 1157 are disordered; sequence CQRGREQQEKEGKEGNSKKTM. Residues 1139–1157 show a composition bias toward basic and acidic residues; that stretch reads RGREQQEKEGKEGNSKKTM.

In terms of assembly, interacts with ARID4B, BRMS1L, HCFC1, HDAC1, HDAC2, MXI1, SAP30L, SAP130, SFPQ and TOPORS. Interacts with OGT (via TPRs 1-6); the interaction mediates transcriptional repression in parallel with histone deacetylase. Interacts with BAZ2A, MXD1, MXD3, MXD4, MBD2, DACH1, NCOR1, NR4A2, REST, RLIM, SAP30, SETDB1, SMYD2, and SUDS3. Interacts with PHF12 in a complex composed of HDAC1, PHF12 and SAP30. Interacts with TET1; the interaction recruits SIN3A to gene promoters. The large PER complex involved in the histone deacetylation is composed of at least HDAC1, PER2, SFPQ and SIN3A. Interacts with KLF11. Interacts with PPHLN1. Found in a complex with YY1, GON4L and HDAC1. Interacts (via PAH2) with FOXK1. Interacts with FOXK2. Found in a complex composed of at least SINHCAF, SIN3A, HDAC1, SAP30, RBBP4, OGT and TET1. Interacts with SINHCAF. Interacts with SPHK2. Post-translationally, SUMO1 sumoylated by TOPORS. Probably desumoylated by SENP2. As to expression, widely expressed. Highest levels in testis, lung and thymus. Expressed at relatively high levels throughout brain development. In adult mice, expression is high in neurogenic regions such as the subventricular zone, rostral migratory stream, olfactory bulb and dentate gyrus.

It localises to the nucleus. Its subcellular location is the nucleolus. Acts as a transcriptional repressor. Corepressor for REST. Interacts with MXI1 to repress MYC responsive genes and antagonize MYC oncogenic activities. Also interacts with MXD1-MAX heterodimers to repress transcription by tethering SIN3A to DNA. Acts cooperatively with OGT to repress transcription in parallel with histone deacetylation. Involved in the control of the circadian rhythms. Required for the transcriptional repression of circadian target genes, such as PER1, mediated by the large PER complex through histone deacetylation. Cooperates with FOXK1 to regulate cell cycle progression probably by repressing cell cycle inhibitor genes expression. Required for cortical neuron differentiation and callosal axon elongation. This is Paired amphipathic helix protein Sin3a (Sin3a) from Mus musculus (Mouse).